The following is a 368-amino-acid chain: RNA polymerase sigma factor SigA (368 aa).

Residues 69-90 (LVNEKDSSDTDEKLNPSDLSAP) form a disordered region. A compositionally biased stretch (basic and acidic residues) spans 71 to 83 (NEKDSSDTDEKLN). Residues 135–205 (LAEANLRLVV…TRAIADQART (71 aa)) are sigma-70 factor domain-2. Residues 159–162 (DLIQ) carry the Interaction with polymerase core subunit RpoC motif. The tract at residues 214–290 (ETINKLIRVQ…DQEAQSPSDH (77 aa)) is sigma-70 factor domain-3. Residues 303–356 (VLDTLTDREENVLRLRFGLDDGRTRTLEEVGKVFGVTRERIRQIEAKALRKLRH) form a sigma-70 factor domain-4 region. A DNA-binding region (H-T-H motif) is located at residues 329–348 (LEEVGKVFGVTRERIRQIEA).

The protein belongs to the sigma-70 factor family. RpoD/SigA subfamily. Interacts transiently with the RNA polymerase catalytic core.

The protein resides in the cytoplasm. Sigma factors are initiation factors that promote the attachment of RNA polymerase to specific initiation sites and are then released. This sigma factor is the primary sigma factor during exponential growth. The chain is RNA polymerase sigma factor SigA from Staphylococcus aureus (strain N315).